Consider the following 764-residue polypeptide: Plasma membrane fusion protein prm-1 (764 aa).

The Extracellular segment spans residues 1–61; it reads MVYNEKNGGG…YLGLRARLSQ (61 aa). A helical transmembrane segment spans residues 62 to 82; that stretch reads LWFNRWTILLILVLIRVIILT. At 83–149 the chain is on the cytoplasmic side; it reads ANLKENLGDA…LKMILTGVQA (67 aa). The helical transmembrane segment at 150 to 170 threads the bilayer; sequence IIMFVINMYIGTFACLVAAFI. Topologically, residues 171–334 are extracellular; sequence HGGLHVATAV…SLITLVYKAK (164 aa). Residues asparagine 271 and asparagine 315 are each glycosylated (N-linked (GlcNAc...) asparagine). A helical transmembrane segment spans residues 335–355; sequence IAFLVVIIILALLAIFVMGYI. Residues 356-424 are Cytoplasmic-facing; the sequence is EYRGFKRERE…AFAYATSLPA (69 aa). The chain crosses the membrane as a helical span at residues 425–445; that stretch reads LFVLSLAVAGMLSCLFQWVLL. Topologically, residues 446–624 are extracellular; it reads RQIEKKAPEL…NGVIQEALIT (179 aa). 3 N-linked (GlcNAc...) asparagine glycosylation sites follow: asparagine 479, asparagine 508, and asparagine 527. A helical transmembrane segment spans residues 625–645; that stretch reads LGLFLTYVIVVLIGVMGALIG. The Cytoplasmic segment spans residues 646-764; the sequence is WATPGKTRGE…EKVPGYFTPI (119 aa). Disordered regions lie at residues 653–701 and 735–754; these read RGEG…GGGG and HQRT…PHGD.

This sequence belongs to the PRM1 family.

It is found in the cell membrane. Involved in cell fusion during mating by stabilizing the plasma membrane fusion event. The polypeptide is Plasma membrane fusion protein prm-1 (prm-1) (Neurospora crassa (strain ATCC 24698 / 74-OR23-1A / CBS 708.71 / DSM 1257 / FGSC 987)).